We begin with the raw amino-acid sequence, 203 residues long: Histidine biosynthesis bifunctional protein HisIE (203 aa).

Residues 1–114 (MLTEQQRREL…FGDASHQWLF (114 aa)) are phosphoribosyl-AMP cyclohydrolase. Residues 115–203 (LYQLEQLLAE…VIDNLRKRHQ (89 aa)) form a phosphoribosyl-ATP pyrophosphohydrolase region.

In the N-terminal section; belongs to the PRA-CH family. The protein in the C-terminal section; belongs to the PRA-PH family.

Its subcellular location is the cytoplasm. The catalysed reaction is 1-(5-phospho-beta-D-ribosyl)-ATP + H2O = 1-(5-phospho-beta-D-ribosyl)-5'-AMP + diphosphate + H(+). The enzyme catalyses 1-(5-phospho-beta-D-ribosyl)-5'-AMP + H2O = 1-(5-phospho-beta-D-ribosyl)-5-[(5-phospho-beta-D-ribosylamino)methylideneamino]imidazole-4-carboxamide. Its pathway is amino-acid biosynthesis; L-histidine biosynthesis; L-histidine from 5-phospho-alpha-D-ribose 1-diphosphate: step 2/9. The protein operates within amino-acid biosynthesis; L-histidine biosynthesis; L-histidine from 5-phospho-alpha-D-ribose 1-diphosphate: step 3/9. This Salmonella typhimurium (strain LT2 / SGSC1412 / ATCC 700720) protein is Histidine biosynthesis bifunctional protein HisIE (hisI).